The sequence spans 504 residues: MQQSTPYLSFRGIGKTFPGVKALTDISFDCYAGQVHALMGENGAGKSTLLKILSGNYAPTTGSVVINGQEMSFSDTTAALNAGVAIIYQELHLVPEMTVAENIYLGQLPHKGGIVNRSLLNYEAGLQIKHLGMDIDPDTPLKYLSIGQWQMVEIAKALARNAKIIAFDEPTSSLSAREIDNLFRVIRELRKEGRVILYVSHRMEEIFALSDAITVFKDGRYVKTFTDMQQVDHDALVQAMVGRDIGDIYGWQPRSYGEERLRLDAVKAPGVRTPISLAVRSGEIVGLFGLVGAGRSELMKGMFGGTQITAGQVYIDQQPIDIRKPSHAITAGMMLCPEDRKAEGIIPVHSVRDNINISARRKHVLGGCVINNGWEENNADHHIRSLNIKTPGAEQLIMNLSGGNQQKAILGRWLSEEMKVILLDEPTRGIDVGAKHEIYNVIYALAAQGVAVLFASSDLPEVLGVADRIVVMREGEIAGELLHEQADERQALSLAMPKVSQAVA.

ABC transporter domains follow at residues 8–243 and 256–499; these read LSFR…MVGR and YGEE…MPKV. 40–47 provides a ligand contact to ATP; the sequence is GENGAGKS.

It belongs to the ABC transporter superfamily. Arabinose importer (TC 3.A.1.2.2) family. The complex is composed of two ATP-binding proteins (AraG), two transmembrane proteins (AraH) and a solute-binding protein (AraF).

It is found in the cell inner membrane. The enzyme catalyses L-arabinose(out) + ATP + H2O = L-arabinose(in) + ADP + phosphate + H(+). Functionally, part of the ABC transporter complex AraFGH involved in arabinose import. Responsible for energy coupling to the transport system. This chain is Arabinose import ATP-binding protein AraG, found in Escherichia coli O6:K15:H31 (strain 536 / UPEC).